We begin with the raw amino-acid sequence, 138 residues long: Large-conductance mechanosensitive channel (138 aa).

The next 2 membrane-spanning stretches (helical) occupy residues 19-39 and 81-101; these read VGVI…GDVI and GSFL…FLVI.

It belongs to the MscL family. As to quaternary structure, homopentamer.

It is found in the cell inner membrane. Channel that opens in response to stretch forces in the membrane lipid bilayer. May participate in the regulation of osmotic pressure changes within the cell. The chain is Large-conductance mechanosensitive channel from Bradyrhizobium diazoefficiens (strain JCM 10833 / BCRC 13528 / IAM 13628 / NBRC 14792 / USDA 110).